A 187-amino-acid polypeptide reads, in one-letter code: PsbQ-like protein 3, chloroplastic (187 aa).

A chloroplast-targeting transit peptide spans 1–32; the sequence is MAISKPPPLHFTFFHNQDSSIDTSDSNLALSI. The transit peptide at 33 to 60 directs the protein to the thylakoid; it reads DTSRRRRDVLLTISGTLIPQLFFFDRKR.

It belongs to the PsbQ family. In terms of assembly, subunit of the lumenal protuberance of the NDH complex.

It localises to the plastid. The protein localises to the chloroplast thylakoid membrane. Functionally, required for both formation and activity of the chloroplast NAD(P)H dehydrogenase (NDH) complex. The sequence is that of PsbQ-like protein 3, chloroplastic (PQL3) from Arabidopsis thaliana (Mouse-ear cress).